Consider the following 406-residue polypeptide: 26S proteasome regulatory subunit 8 (406 aa).

Position 2 is an N-acetylalanine (alanine 2). Serine 120 is subject to Phosphoserine. Residues 186–406 (VLLYGPPGTG…KNMSIKKLWK (221 aa)) are may mediate interaction with PRPF9. 190–197 (GPPGTGKT) is a binding site for ATP. Lysine 222 is subject to N6-acetyllysine.

This sequence belongs to the AAA ATPase family. In terms of assembly, component of the 19S proteasome regulatory particle complex. The 26S proteasome consists of a 20S core particle (CP) and two 19S regulatory subunits (RP). The regulatory particle is made of a lid composed of 9 subunits, a base containing 6 ATPases including PSMC5 and few additional components. Component of a complex with USP49 and RUVBL1. Interacts with PRPF19. Interacts with TRIM5. Interacts with NDC80. Interacts with PAAF1. Interacts, in vitro, with the thyroid hormone receptor (in a thyroid hormone T3-dependent manner) and with retinoid X receptor (RXR). Interacts with ERCC6.

Its subcellular location is the cytoplasm. The protein localises to the nucleus. Its function is as follows. Component of the 26S proteasome, a multiprotein complex involved in the ATP-dependent degradation of ubiquitinated proteins. This complex plays a key role in the maintenance of protein homeostasis by removing misfolded or damaged proteins, which could impair cellular functions, and by removing proteins whose functions are no longer required. Therefore, the proteasome participates in numerous cellular processes, including cell cycle progression, apoptosis, or DNA damage repair. PSMC5 belongs to the heterohexameric ring of AAA (ATPases associated with diverse cellular activities) proteins that unfolds ubiquitinated target proteins that are concurrently translocated into a proteolytic chamber and degraded into peptides. The protein is 26S proteasome regulatory subunit 8 (PSMC5) of Bos taurus (Bovine).